Consider the following 822-residue polypeptide: MGTFGTESPLRLQVSSCLKTLSTSRDSGEIVHALRTLMRCLDDGEFTRIHHTHALQVLVSAQSSHWFSRSHDEDEEEMKKLWGEIIIRGPAEQTLLTLLDTISSTGESEALDRCVSALEMFLSAARLQVLLWSRCEVSGASADSPQLTETVIGHLAALPSITSNHLHTNTPDIFLPQQYYPLLAASILDTLEKTCHALRAGRDCSLGFVSQVLGKVCIQGYSSQMFETLGPRLSFVTREDALYQRVTQKLMENVPERCTESVITGLIRSLSGAAAVSRLMGNLVLTNKKAQFVLTHKLILQQYQHPTRLLKSVLGYLAVDSSRRPLLKQVLRSVCQVWCNSSAVKHTCVEQQLYVSKALLLCVALLDDSEIQELRQEMLQCMLGGVQCRLDSNVERIRRMGMVVGECLSHRLDTPGSQLKFQYGADEEIGELKSLMESLAVNDDEEEQPDASNSLQPEPKVEAPVSSQSVASDPGNGSESELDSDDDLTPYDMSADQEKKKSAPPRYVRDCLEGLMSSDDAERFELSLQVAETLLRKNVKATQEVSVQFSKVLLHLEDRYNTALFLSLRQNAMVALTVTDIKPVVDYWTTEFYALNYSLRQRLDILEVLALAAQELSEPVTNKHTGAEPITAVTPLGQSDDITHWRQIVDKRIQSKTRRISKGVTQPVKAVPNRYAPVAGFFFFPLFRSYDRPQTTFDLLGGDHLVLGRLLHTLGLLMHLAVNAPVVSQMGRALLDFVWAVRFHTDQMVRRGVMFAVCAVFLSMPSENLLTELGDDLMETRAWLADVAESDCDSDCRSLAVQSLMLMDKNLKSQLQIPDMET.

The disordered stretch occupies residues Asn-442 to Pro-504. Residues Val-465–Gly-477 are compositionally biased toward polar residues. A compositionally biased stretch (acidic residues) spans Ser-480–Thr-489.

Belongs to the TEL2 family.

The protein localises to the cytoplasm. It is found in the membrane. Its subcellular location is the nucleus. Regulator of the DNA damage response (DDR). Part of the TTT complex that is required to stabilize protein levels of the phosphatidylinositol 3-kinase-related protein kinase (PIKK) family proteins. Promotes assembly, stabilizes and maintains the activity of TORC complexes, which regulate cell growth and survival in response to nutrient and hormonal signals. May be involved in telomere length regulation. The polypeptide is Telomere length regulation protein TEL2 homolog (telo2) (Danio rerio (Zebrafish)).